The primary structure comprises 175 residues: Rubredoxin-1 (175 aa).

2 consecutive Rubredoxin-like domains span residues 1–53 (MARY…FVLI) and 119–170 (FLKW…YVLY). Positions 6, 9, 39, 42, 124, 127, 157, and 160 each coordinate Fe cation.

It belongs to the rubredoxin family. Fe(3+) is required as a cofactor.

Its subcellular location is the cytoplasm. It participates in hydrocarbon metabolism; alkane degradation. Functionally, involved in the hydrocarbon hydroxylating system, which transfers electrons from NADH to rubredoxin reductase and then through rubredoxin to alkane 1 monooxygenase. The polypeptide is Rubredoxin-1 (alkG) (Pseudomonas putida (Arthrobacter siderocapsulatus)).